The sequence spans 349 residues: Core protein VP7 (349 aa).

Asn287 is a glycosylation site (N-linked (GlcNAc...) asparagine; by host).

The protein belongs to the orbivirus VP7 family. Homotrimer that assemble in a complex of 260 capsomers on an inner scaffold composed of VP3.

The protein localises to the virion. In terms of biological role, the VP7 protein is one of the five proteins (with VP1, VP3, VP4, and VP6) which form the inner capsid of the virus. The polypeptide is Core protein VP7 (Segment-7) (Antilocapra americana (Pronghorn)).